The following is a 374-amino-acid chain: MPIFTTPFASLELLRQPHQPNEPLQAFDAADEYLLNHLHEQGLRAEDSLLLLNDSFGALACSLAGRCQVTSSSDSHLGFIALENNLAGNGLNRDAVRFLPSSETPQGPFDWVLIRVPKTLALLEEQLIRLHGQLAPGARVVAAAMVKHLPRAAGDLLEKYIGPVQASLAVKKARLLLATPEAKAAPHSPYPTRYRLDKPALELINHANVFCRDGLDIGTRAFLPHLPRHLDARRVADLGCGNGVLGIAYALGSPQAQLTLVDESYMAVQSARENWAAALGERPATIRAGDGLAEQPAGSLDLVLCNPPFHQQQVVGDFLAWRMFQQARAALVTGGELWIVGNRHLGYHAKLARLFRGVEQVAANPKFVVLKASK.

The protein belongs to the methyltransferase superfamily. RlmG family.

The protein localises to the cytoplasm. The enzyme catalyses guanosine(1835) in 23S rRNA + S-adenosyl-L-methionine = N(2)-methylguanosine(1835) in 23S rRNA + S-adenosyl-L-homocysteine + H(+). In terms of biological role, specifically methylates the guanine in position 1835 (m2G1835) of 23S rRNA. This is Ribosomal RNA large subunit methyltransferase G from Ectopseudomonas mendocina (strain ymp) (Pseudomonas mendocina).